Consider the following 236-residue polypeptide: Ribose-5-phosphate isomerase A (236 aa).

Residues 33 to 36 (TGST), 90 to 93 (DGAD), and 103 to 106 (KGGG) each bind substrate. The active-site Proton acceptor is E112. K130 contacts substrate.

It belongs to the ribose 5-phosphate isomerase family. Homodimer.

The catalysed reaction is aldehydo-D-ribose 5-phosphate = D-ribulose 5-phosphate. It functions in the pathway carbohydrate degradation; pentose phosphate pathway; D-ribose 5-phosphate from D-ribulose 5-phosphate (non-oxidative stage): step 1/1. Catalyzes the reversible conversion of ribose-5-phosphate to ribulose 5-phosphate. This chain is Ribose-5-phosphate isomerase A, found in Trichormus variabilis (strain ATCC 29413 / PCC 7937) (Anabaena variabilis).